A 611-amino-acid chain; its full sequence is DNA mismatch repair protein MutL (611 aa).

Positions 364–384 (NVNSKPSKYRPATSPTVPKYT) are disordered.

This sequence belongs to the DNA mismatch repair MutL/HexB family.

Functionally, this protein is involved in the repair of mismatches in DNA. It is required for dam-dependent methyl-directed DNA mismatch repair. May act as a 'molecular matchmaker', a protein that promotes the formation of a stable complex between two or more DNA-binding proteins in an ATP-dependent manner without itself being part of a final effector complex. In Rickettsia bellii (strain OSU 85-389), this protein is DNA mismatch repair protein MutL.